Consider the following 267-residue polypeptide: Zerumbone synthase (267 aa).

Residue leucine 9–cysteine 33 participates in NAD(+) binding. Serine 142 is a substrate binding site. Tyrosine 155 acts as the Proton acceptor in catalysis.

The protein belongs to the short-chain dehydrogenases/reductases (SDR) family. Expressed in leaves, stems and rhizomes.

It catalyses the reaction 10-hydroxy-alpha-humulene + NAD(+) = zerumbone + NADH + H(+). Functionally, catalyzes 8-hydroxy-alpha-humulene into zerumbone in presence of NAD. Also converts borneol to camphor in vitro. Zerumbone is a highly promising multi-anticancer agent. This chain is Zerumbone synthase (ZSD1), found in Zingiber zerumbet (Shampoo ginger).